We begin with the raw amino-acid sequence, 327 residues long: ATP-dependent (S)-NAD(P)H-hydrate dehydratase (327 aa).

Residues 11 to 313 enclose the YjeF C-terminal domain; it reads LLTRVKRIIP…RHVGKAYNAL (303 aa). Residues glycine 121 and 174–180 contribute to the (6S)-NADPHX site; that span reads NVIEFKR. ATP-binding positions include 209-213 and 228-237; these read KGQSD and GGLKRCGGQG. Aspartate 238 contacts (6S)-NADPHX.

The protein belongs to the NnrD/CARKD family. The cofactor is Mg(2+).

The protein resides in the cytoplasm. It catalyses the reaction (6S)-NADHX + ATP = ADP + phosphate + NADH + H(+). The catalysed reaction is (6S)-NADPHX + ATP = ADP + phosphate + NADPH + H(+). In terms of biological role, catalyzes the dehydration of the S-form of NAD(P)HX at the expense of ATP, which is converted to ADP. Together with NAD(P)HX epimerase, which catalyzes the epimerization of the S- and R-forms, the enzyme allows the repair of both epimers of NAD(P)HX, a damaged form of NAD(P)H that is a result of enzymatic or heat-dependent hydration. This chain is ATP-dependent (S)-NAD(P)H-hydrate dehydratase, found in Schizosaccharomyces pombe (strain 972 / ATCC 24843) (Fission yeast).